The primary structure comprises 706 residues: DNA ligase (706 aa).

The tract at residues 1–20 is disordered; the sequence is MSATAGTADESGVASAAASA. NAD(+) is bound by residues 50–54, 99–100, and Glu128; these read DAEYD and SL. The active-site N6-AMP-lysine intermediate is Lys130. 4 residues coordinate NAD(+): Arg151, Glu188, Lys304, and Lys328. Zn(2+) is bound by residues Cys422, Cys425, Cys440, and Cys446. Residues 604-694 form the BRCT domain; sequence EGPRPLDGVT…VDAASKLAVP (91 aa).

Belongs to the NAD-dependent DNA ligase family. LigA subfamily. The cofactor is Mg(2+). Mn(2+) is required as a cofactor.

It carries out the reaction NAD(+) + (deoxyribonucleotide)n-3'-hydroxyl + 5'-phospho-(deoxyribonucleotide)m = (deoxyribonucleotide)n+m + AMP + beta-nicotinamide D-nucleotide.. DNA ligase that catalyzes the formation of phosphodiester linkages between 5'-phosphoryl and 3'-hydroxyl groups in double-stranded DNA using NAD as a coenzyme and as the energy source for the reaction. It is essential for DNA replication and repair of damaged DNA. This is DNA ligase from Frankia casuarinae (strain DSM 45818 / CECT 9043 / HFP020203 / CcI3).